Reading from the N-terminus, the 1427-residue chain is DNA-directed RNA polymerase subunit beta' (1427 aa).

The Zn(2+) site is built by cysteine 66, cysteine 68, cysteine 81, and cysteine 84. Aspartate 472, aspartate 474, and aspartate 476 together coordinate Mg(2+). The Zn(2+) site is built by cysteine 815, cysteine 889, cysteine 896, and cysteine 899.

The protein belongs to the RNA polymerase beta' chain family. As to quaternary structure, the RNAP catalytic core consists of 2 alpha, 1 beta, 1 beta' and 1 omega subunit. When a sigma factor is associated with the core the holoenzyme is formed, which can initiate transcription. Mg(2+) serves as cofactor. Requires Zn(2+) as cofactor.

It catalyses the reaction RNA(n) + a ribonucleoside 5'-triphosphate = RNA(n+1) + diphosphate. Functionally, DNA-dependent RNA polymerase catalyzes the transcription of DNA into RNA using the four ribonucleoside triphosphates as substrates. The polypeptide is DNA-directed RNA polymerase subunit beta' (Bacteroides thetaiotaomicron (strain ATCC 29148 / DSM 2079 / JCM 5827 / CCUG 10774 / NCTC 10582 / VPI-5482 / E50)).